The following is a 60-amino-acid chain: Metallothionein A (60 aa).

The segment at 1-28 (MDPCECSKSGNCNCGGSCTCTNCSCKSC) is beta. The a divalent metal cation site is built by Cys4, Cys6, Cys12, Cys14, Cys18, Cys20, Cys23, Cys25, Cys28, Cys32, Cys33, Cys35, Cys36, Cys40, Cys43, Cys47, Cys49, Cys54, Cys58, and Cys59. Residues 29-60 (KKSCCPCCPSGCTKCASGCVCIGKTCDTSCCQ) are alpha.

This sequence belongs to the metallothionein superfamily. Type 1 family.

Functionally, metallothioneins have a high content of cysteine residues that bind various heavy metals. In Chaenocephalus aceratus (Blackfin icefish), this protein is Metallothionein A (mta).